We begin with the raw amino-acid sequence, 852 residues long: Carbohydrate-responsive element-binding protein (852 aa).

Low complexity predominate over residues 1 to 12 (MAGALAGLAAGL). Disordered stretches follow at residues 1–36 (MAGA…SLRR) and 54–80 (VSSP…FGPR). Residues Ser20, Ser23, and Ser25 each carry the phosphoserine modification. At Thr27 the chain carries Phosphothreonine. Ser29 bears the Phosphoserine mark. Ser196 bears the Phosphoserine mark. Disordered regions lie at residues 328-365 (DSLF…CPGP), 486-527 (PCFS…NNPC), and 548-648 (STLL…NKTE). The span at 505-521 (ASPPTLAPATASPPTTA) shows a compositional bias: low complexity. A compositionally biased stretch (polar residues) spans 548-559 (STLLRSPGSPQE). Ser556 is modified (phosphoserine; by AMPK). A compositionally biased stretch (pro residues) spans 568–584 (FLPPTPAPTPPRPPPGP). Residues Ser602, Ser614, and Ser631 each carry the phosphoserine modification. The 55-residue stretch at 649–703 (NRRITHISAEQKRRFNIKLGFDTLHGLVSTLSAQPSLKVSKATTLQKTAEYILML) folds into the bHLH domain. The interval 703–724 (LQQERAGLQEEAQQLRDEIEEL) is leucine-zipper.

As to quaternary structure, binds DNA as a heterodimer with MLX/TCFL4. In terms of processing, phosphorylation at Ser-556 by AMPK inactivates the DNA-binding activity. As to expression, expressed in liver, heart, kidney, cerebellum and intestinal tissues.

It is found in the nucleus. Binds DNA as a heterodimer with MLX/TCFL4 and activates transcription. Binds to the canonical E box sequence 5'-CACGTG-3'. Plays a role in transcriptional activation of glycolytic target genes. Involved in glucose-responsive gene regulation. Regulates transcription in response to changes in cellular carbohydrate abundance such as occurs during fasting to feeding metabolic transition. Refeeding stimulates MLXIPL/ChREBP transcription factor, leading to increased BCKDK to PPM1K expression ratio, phosphorylation and activation of ACLY that ultimately results in the generation of malonyl-CoA and oxaloacetate immediate substrates of de novo lipogenesis and gluconeogenesis, respectively. In Homo sapiens (Human), this protein is Carbohydrate-responsive element-binding protein (MLXIPL).